Here is a 300-residue protein sequence, read N- to C-terminus: Ribonuclease HIII (300 aa).

Residues 86–300 form the RNase H type-2 domain; that stretch reads RPRLGVDESG…FNEICDSASA (215 aa). Positions 92, 93, and 196 each coordinate a divalent metal cation.

Belongs to the RNase HII family. RnhC subfamily. It depends on Mn(2+) as a cofactor. Mg(2+) serves as cofactor.

It localises to the cytoplasm. It carries out the reaction Endonucleolytic cleavage to 5'-phosphomonoester.. In terms of biological role, endonuclease that specifically degrades the RNA of RNA-DNA hybrids. This chain is Ribonuclease HIII, found in Chlamydia caviae (strain ATCC VR-813 / DSM 19441 / 03DC25 / GPIC) (Chlamydophila caviae).